Here is a 373-residue protein sequence, read N- to C-terminus: Indole glucosinolate O-methyltransferase 2 (373 aa).

Residues Gly-217, Asp-240, Asp-260, Met-261, and Lys-274 each contribute to the S-adenosyl-L-homocysteine site. The Proton acceptor role is filled by His-278.

Belongs to the class I-like SAM-binding methyltransferase superfamily. Cation-independent O-methyltransferase family.

The protein operates within secondary metabolite biosynthesis. Functionally, involved in indole glucosinolate biosynthesis. Catalyzes methoxylation reactions of the glucosinolate indole ring. Converts the hydroxy intermediates 4-hydroxy-indol-3-yl-methylglucosinolate (4OH-I3M) and 1-hydroxy-indol-3-yl-methylglucosinolate (1OH-I3M) to 4-methoxy-indol-3-yl-methylglucosinolate (4MO-I3M) and 1-methoxy-indol-3-yl-methylglucosinolate (1MO-I3M), respectively. The sequence is that of Indole glucosinolate O-methyltransferase 2 from Arabidopsis thaliana (Mouse-ear cress).